Reading from the N-terminus, the 474-residue chain is Bifunctional protein HldE (474 aa).

Residues 1 to 318 (MKLSMPRFDQ…RAIQREEGSE (318 aa)) are ribokinase. 194–197 (NLSE) lines the ATP pocket. Asp263 is an active-site residue. The segment at 343-474 (FTNGCFDILH…AIVEKIRKSE (132 aa)) is cytidylyltransferase.

This sequence in the N-terminal section; belongs to the carbohydrate kinase PfkB family. In the C-terminal section; belongs to the cytidylyltransferase family. In terms of assembly, homodimer.

It catalyses the reaction D-glycero-beta-D-manno-heptose 7-phosphate + ATP = D-glycero-beta-D-manno-heptose 1,7-bisphosphate + ADP + H(+). The catalysed reaction is D-glycero-beta-D-manno-heptose 1-phosphate + ATP + H(+) = ADP-D-glycero-beta-D-manno-heptose + diphosphate. Its pathway is nucleotide-sugar biosynthesis; ADP-L-glycero-beta-D-manno-heptose biosynthesis; ADP-L-glycero-beta-D-manno-heptose from D-glycero-beta-D-manno-heptose 7-phosphate: step 1/4. The protein operates within nucleotide-sugar biosynthesis; ADP-L-glycero-beta-D-manno-heptose biosynthesis; ADP-L-glycero-beta-D-manno-heptose from D-glycero-beta-D-manno-heptose 7-phosphate: step 3/4. Its function is as follows. Catalyzes the phosphorylation of D-glycero-D-manno-heptose 7-phosphate at the C-1 position to selectively form D-glycero-beta-D-manno-heptose-1,7-bisphosphate. Functionally, catalyzes the ADP transfer from ATP to D-glycero-beta-D-manno-heptose 1-phosphate, yielding ADP-D-glycero-beta-D-manno-heptose. The chain is Bifunctional protein HldE from Pseudomonas fluorescens (strain Pf0-1).